The chain runs to 448 residues: Adenylosuccinate synthetase (448 aa).

GTP-binding positions include 36–42 (GDEGKGK) and 64–66 (GHT). D37 functions as the Proton acceptor in the catalytic mechanism. Mg(2+) contacts are provided by D37 and G64. IMP contacts are provided by residues 37 to 40 (DEGK), 62 to 65 (NAGH), T154, R168, N246, T261, and R325. The active-site Proton donor is H65. A substrate-binding site is contributed by 321 to 327 (VTTKRKR). GTP is bound by residues R327, 353-355 (KLD), and 436-438 (GVG).

This sequence belongs to the adenylosuccinate synthetase family. As to quaternary structure, homodimer. Requires Mg(2+) as cofactor.

Its subcellular location is the cytoplasm. The enzyme catalyses IMP + L-aspartate + GTP = N(6)-(1,2-dicarboxyethyl)-AMP + GDP + phosphate + 2 H(+). Its pathway is purine metabolism; AMP biosynthesis via de novo pathway; AMP from IMP: step 1/2. Its function is as follows. Plays an important role in the de novo pathway and in the salvage pathway of purine nucleotide biosynthesis. Catalyzes the first committed step in the biosynthesis of AMP from IMP. This is Adenylosuccinate synthetase from Drosophila ananassae (Fruit fly).